A 197-amino-acid chain; its full sequence is Ribosomal RNA large subunit methyltransferase E (197 aa).

Residues Gly50, Trp52, Asp67, Asp83, and Asp111 each coordinate S-adenosyl-L-methionine. Residue Lys151 is the Proton acceptor of the active site.

Belongs to the class I-like SAM-binding methyltransferase superfamily. RNA methyltransferase RlmE family.

The protein resides in the cytoplasm. The catalysed reaction is uridine(2552) in 23S rRNA + S-adenosyl-L-methionine = 2'-O-methyluridine(2552) in 23S rRNA + S-adenosyl-L-homocysteine + H(+). Functionally, specifically methylates the uridine in position 2552 of 23S rRNA at the 2'-O position of the ribose in the fully assembled 50S ribosomal subunit. The sequence is that of Ribosomal RNA large subunit methyltransferase E from Thermoplasma volcanium (strain ATCC 51530 / DSM 4299 / JCM 9571 / NBRC 15438 / GSS1).